The chain runs to 351 residues: UDP-N-acetylglucosamine--N-acetylmuramyl-(pentapeptide) pyrophosphoryl-undecaprenol N-acetylglucosamine transferase (351 aa).

UDP-N-acetyl-alpha-D-glucosamine is bound by residues 12 to 14 (TGG), N124, R160, S188, I239, 258 to 263 (ALTVCE), and Q283.

Belongs to the glycosyltransferase 28 family. MurG subfamily.

It localises to the cell inner membrane. It catalyses the reaction di-trans,octa-cis-undecaprenyl diphospho-N-acetyl-alpha-D-muramoyl-L-alanyl-D-glutamyl-meso-2,6-diaminopimeloyl-D-alanyl-D-alanine + UDP-N-acetyl-alpha-D-glucosamine = di-trans,octa-cis-undecaprenyl diphospho-[N-acetyl-alpha-D-glucosaminyl-(1-&gt;4)]-N-acetyl-alpha-D-muramoyl-L-alanyl-D-glutamyl-meso-2,6-diaminopimeloyl-D-alanyl-D-alanine + UDP + H(+). It participates in cell wall biogenesis; peptidoglycan biosynthesis. Cell wall formation. Catalyzes the transfer of a GlcNAc subunit on undecaprenyl-pyrophosphoryl-MurNAc-pentapeptide (lipid intermediate I) to form undecaprenyl-pyrophosphoryl-MurNAc-(pentapeptide)GlcNAc (lipid intermediate II). The polypeptide is UDP-N-acetylglucosamine--N-acetylmuramyl-(pentapeptide) pyrophosphoryl-undecaprenol N-acetylglucosamine transferase (Actinobacillus pleuropneumoniae serotype 7 (strain AP76)).